The primary structure comprises 449 residues: MGSDVRDLNALLPAVPSLGGGGGCALPVSGAAQWAPVLDFAPPGASAYGSLGGPAPPPAPPPPPPPPPHSFIKQEPSWGGAEPHEEQCLSAFTVHFSGQFTGTAGACRYGPFGPPPPSQASSGQARMFPNAPYLPSCLESQPAIRNQGYSTVTFDGTPSYGHTPSHHAAQFPNHSFKHEDPMGQQGSLGEQQYSVPPPVYGCHTPTDSCTGSQALLLRTPYSSDNLYQMTSQLECMTWNQMNLGATLKGVAAGSSSSVKWTEGQSNHSTGYESDNHTTPILCGAQYRIHTHGVFRGIQDVRRVPGVAPTLVRSASETSEKRPFMCAYPGCNKRYFKLSHLQMHSRKHTGEKPYQCDFKDCERRFSRSDQLKRHQRRHTGVKPFQCKTCQRKFSRSDHLKTHTRTHTGKTSEKPFSCRWPSCQKKFARSDELVRHHNMHQRNMTKLQLAL.

The segment at 48-84 (YGSLGGPAPPPAPPPPPPPPPHSFIKQEPSWGGAEPH) is disordered. Positions 54–69 (PAPPPAPPPPPPPPPH) are enriched in pro residues. Glycyl lysine isopeptide (Lys-Gly) (interchain with G-Cter in SUMO) cross-links involve residues Lys73 and Lys177. Residues 236-244 (MTWNQMNLG) carry the 9aaTAD motif. C2H2-type zinc fingers lie at residues 323-347 (FMCAYPGCNKRYFKLSHLQMHSRKH), 353-377 (YQCDFKDCERRFSRSDQLKRHQRRH), and 383-405 (FQCKTCQRKFSRSDHLKTHTRTH). Important for interaction with target DNA stretches follow at residues 367 to 381 (SDQLKRHQRRHTGVK) and 393 to 401 (SRSDHLKTH). Residues 408–410 (KTS) carry the KTS motif motif. The C2H2-type 4 zinc-finger motif lies at 414–438 (FSCRWPSCQKKFARSDELVRHHNMH). Lys444 is covalently cross-linked (Glycyl lysine isopeptide (Lys-Gly) (interchain with G-Cter in SUMO2)).

This sequence belongs to the EGR C2H2-type zinc-finger protein family. As to quaternary structure, homodimer. Interacts with WTIP. Interacts with actively translating polysomes. Detected in nuclear ribonucleoprotein (mRNP) particles. Interacts with HNRNPU via the zinc-finger region. Interacts with U2AF2. Interacts with CITED2. Interacts with ZNF224 via the zinc-finger region. Interacts with WTAP and SRY. Interacts with AMER1. Interacts with RBM4. Expressed in the kidney and a subset of hematopoietic cells.

It localises to the nucleus. The protein localises to the nucleolus. It is found in the cytoplasm. The protein resides in the nucleus speckle. Its subcellular location is the nucleoplasm. Transcription factor that plays an important role in cellular development and cell survival. Recognizes and binds to the DNA sequence 5'-GCG(T/G)GGGCG-3'. Regulates the expression of numerous target genes, including EPO. Plays an essential role for development of the urogenital system. It has a tumor suppressor as well as an oncogenic role in tumor formation. Function may be isoform-specific: isoforms lacking the KTS motif may act as transcription factors. Isoforms containing the KTS motif may bind mRNA and play a role in mRNA metabolism or splicing. Isoform 1 has lower affinity for DNA, and can bind RNA. The protein is Wilms tumor protein (WT1) of Homo sapiens (Human).